The primary structure comprises 432 residues: Pachytene checkpoint protein 2 homolog (432 aa).

Position 1 is an N-acetylmethionine (M1). Residue G179–T186 participates in ATP binding.

The protein belongs to the AAA ATPase family. PCH2 subfamily. Specifically interacts with the ligand binding domain of the thyroid receptor (TR). This interaction does not require the presence of thyroid hormone for its interaction. Interacts with proteasome subunit PSMA8; to participate in meiosis progression during spermatogenesis. In terms of tissue distribution, widely expressed, including in testis.

Plays a key role in chromosome recombination and chromosome structure development during meiosis. Required at early steps in meiotic recombination that leads to non-crossovers pathways. Also needed for efficient completion of homologous synapsis by influencing crossover distribution along the chromosomes affecting both crossovers and non-crossovers pathways. Also required for development of higher-order chromosome structures and is needed for synaptonemal-complex formation. In males, required for efficient synapsis of the sex chromosomes and for sex body formation. Promotes early steps of the DNA double-strand breaks (DSBs) repair process upstream of the assembly of RAD51 complexes. Required for depletion of HORMAD1 and HORMAD2 from synapsed chromosomes. Plays a role in mitotic spindle assembly checkpoint (SAC) activation. The chain is Pachytene checkpoint protein 2 homolog (Trip13) from Mus musculus (Mouse).